We begin with the raw amino-acid sequence, 914 residues long: Isoleucine--tRNA ligase (914 aa).

The 'HIGH' region motif lies at proline 64–histidine 74. Residue glutamate 557 participates in L-isoleucyl-5'-AMP binding. Positions proline 598–serine 602 match the 'KMSKS' region motif. Position 601 (lysine 601) interacts with ATP. Residues cysteine 889, cysteine 892, cysteine 906, and cysteine 909 each coordinate Zn(2+).

Belongs to the class-I aminoacyl-tRNA synthetase family. IleS type 1 subfamily. In terms of assembly, monomer. Zn(2+) is required as a cofactor.

It localises to the cytoplasm. It catalyses the reaction tRNA(Ile) + L-isoleucine + ATP = L-isoleucyl-tRNA(Ile) + AMP + diphosphate. Its function is as follows. Catalyzes the attachment of isoleucine to tRNA(Ile). As IleRS can inadvertently accommodate and process structurally similar amino acids such as valine, to avoid such errors it has two additional distinct tRNA(Ile)-dependent editing activities. One activity is designated as 'pretransfer' editing and involves the hydrolysis of activated Val-AMP. The other activity is designated 'posttransfer' editing and involves deacylation of mischarged Val-tRNA(Ile). The protein is Isoleucine--tRNA ligase of Leptospira interrogans serogroup Icterohaemorrhagiae serovar Lai (strain 56601).